The chain runs to 107 residues: MASVRTMTDFHKRIEAADDKLIVLDFYANWCGPCKDMESTVKSLARKYSTKAVVLKIDVDKFEELTERYKVRSMPTFVFLRNNRRLAAFSGADEHKLTNMMAKLVKA.

The Thioredoxin domain occupies 2 to 106 (ASVRTMTDFH…LTNMMAKLVK (105 aa)). Residues C31 and C34 each act as nucleophile in the active site. A disulfide bond links C31 and C34.

It belongs to the thioredoxin family.

The protein localises to the nucleus. Its function is as follows. Participates in various redox reactions through the reversible oxidation of its active center dithiol to a disulfide and catalyzes dithiol-disulfide exchange reactions. As a reducing substrate of peroxiredoxin 1, thioredoxin 2 is preferred over thioredoxin 1. Required for female meiosis and early embryonic development. The protein is Thioredoxin-1 (dhd) of Drosophila yakuba (Fruit fly).